The chain runs to 110 residues: Large ribosomal subunit protein uL22 (110 aa).

It belongs to the universal ribosomal protein uL22 family. Part of the 50S ribosomal subunit.

This protein binds specifically to 23S rRNA; its binding is stimulated by other ribosomal proteins, e.g. L4, L17, and L20. It is important during the early stages of 50S assembly. It makes multiple contacts with different domains of the 23S rRNA in the assembled 50S subunit and ribosome. Its function is as follows. The globular domain of the protein is located near the polypeptide exit tunnel on the outside of the subunit, while an extended beta-hairpin is found that lines the wall of the exit tunnel in the center of the 70S ribosome. In Syntrophus aciditrophicus (strain SB), this protein is Large ribosomal subunit protein uL22.